Reading from the N-terminus, the 78-residue chain is RNA-binding protein Hfq (78 aa).

The Sm domain occupies 10 to 69 (DPFLNALRKEHVPVSIYLVNGIKLQGHIESFDQYVVLLRNTVTQMVYKHAISTVVPARAV).

This sequence belongs to the Hfq family. In terms of assembly, homohexamer.

Its function is as follows. RNA chaperone that binds small regulatory RNA (sRNAs) and mRNAs to facilitate mRNA translational regulation in response to envelope stress, environmental stress and changes in metabolite concentrations. Also binds with high specificity to tRNAs. This is RNA-binding protein Hfq from Janthinobacterium sp. (strain Marseille) (Minibacterium massiliensis).